Reading from the N-terminus, the 536-residue chain is Putative cysteine ligase BshC (536 aa).

This sequence belongs to the BshC family.

In terms of biological role, involved in bacillithiol (BSH) biosynthesis. May catalyze the last step of the pathway, the addition of cysteine to glucosamine malate (GlcN-Mal) to generate BSH. The sequence is that of Putative cysteine ligase BshC from Anoxybacillus flavithermus (strain DSM 21510 / WK1).